A 289-amino-acid chain; its full sequence is 2-hydroxy-6-oxononadienedioate/2-hydroxy-6-oxononatrienedioate hydrolase (289 aa).

The AB hydrolase-1 domain maps to 39–275 (TVVMLHGSGP…RCGHWAQWEH (237 aa)). The active-site Proton acceptor is H269.

It belongs to the AB hydrolase superfamily. MhpC family. In terms of assembly, homodimer.

The catalysed reaction is (2Z,4E)-2-hydroxy-6-oxonona-2,4-dienedioate + H2O = (2Z)-2-hydroxypenta-2,4-dienoate + succinate + H(+). The enzyme catalyses (2Z,4E,7E)-2-hydroxy-6-oxonona-2,4,7-trienedioate + H2O = (2Z)-2-hydroxypenta-2,4-dienoate + fumarate + H(+). Its pathway is aromatic compound metabolism; 3-phenylpropanoate degradation. Catalyzes the cleavage of the C5-C6 bond of 2-hydroxy-6-oxononadienedioate and 2-hydroxy-6-oxononatrienedioate, a dienol ring fission product of the bacterial meta-cleavage pathway for degradation of phenylpropionic acid. This Paraburkholderia xenovorans (strain LB400) protein is 2-hydroxy-6-oxononadienedioate/2-hydroxy-6-oxononatrienedioate hydrolase.